The following is a 393-amino-acid chain: Uroporphyrinogen decarboxylase, chloroplastic (393 aa).

The tract at residues Met1–Val64 is disordered. Residues Ala23–Pro37 show a composition bias toward low complexity. Basic and acidic residues predominate over residues Ser38–Gly50. Residues Arg73–Arg77, Phe92, Ser122, Asp123, Tyr200, Ser255, and His370 each bind substrate.

It belongs to the uroporphyrinogen decarboxylase family. As to quaternary structure, homodimer.

The protein localises to the plastid. Its subcellular location is the chloroplast. The enzyme catalyses uroporphyrinogen III + 4 H(+) = coproporphyrinogen III + 4 CO2. It functions in the pathway porphyrin-containing compound metabolism; protoporphyrin-IX biosynthesis; coproporphyrinogen-III from 5-aminolevulinate: step 4/4. Its function is as follows. Catalyzes the decarboxylation of four acetate groups of uroporphyrinogen-III to yield coproporphyrinogen-III. The chain is Uroporphyrinogen decarboxylase, chloroplastic (LES22) from Zea mays (Maize).